The primary structure comprises 343 residues: MKTKEFHFNLSHSLIEQYPSEKRGSSRLIVLDPQLQKIYHKNSVNNILKYINSNIFNNSKARKSRIYAESEMSSNVEFLILDRIDTNLFTALVSKSKKQIIGNFYKFPEGLMDEILSKNSSEVVLKFNNNVGEDYFEKHCFVPLPSYIKRDYDKIDEDRYQTIYSKYVGSTASATAGLHFSRDLFSAFENNNIEYDFITLHVGAGTFLPVRSKKVEEHNMHFETFLIKDFVAVRLQNAKLLGKRILSIVTTTLRALESSYDNNLKKFKTGQQSTNLFIYPGKNYCFKFVDMLFTNFHTPQSTLLMLVSSFAGKDFVFSFYEEAINKGYKFFSYGDAMLILNNI.

Belongs to the QueA family. Monomer.

The protein localises to the cytoplasm. It carries out the reaction 7-aminomethyl-7-carbaguanosine(34) in tRNA + S-adenosyl-L-methionine = epoxyqueuosine(34) in tRNA + adenine + L-methionine + 2 H(+). It functions in the pathway tRNA modification; tRNA-queuosine biosynthesis. In terms of biological role, transfers and isomerizes the ribose moiety from AdoMet to the 7-aminomethyl group of 7-deazaguanine (preQ1-tRNA) to give epoxyqueuosine (oQ-tRNA). In Borreliella burgdorferi (strain ATCC 35210 / DSM 4680 / CIP 102532 / B31) (Borrelia burgdorferi), this protein is S-adenosylmethionine:tRNA ribosyltransferase-isomerase.